The sequence spans 165 residues: 3-hydroxyacyl-[acyl-carrier-protein] dehydratase FERN, mitochondrial (165 aa).

The transit peptide at 1-35 (MLMKRLFSSSHVFSSSSASSNLLKIGSVLKQARTF) directs the protein to the mitochondrion. The MaoC-like domain occupies 36–124 (ADDDVLGYSK…AVSIRQIKNK (89 aa)).

Homodimer.

It is found in the mitochondrion. The catalysed reaction is a (3R)-hydroxyacyl-[ACP] = a (2E)-enoyl-[ACP] + H2O. Its pathway is lipid metabolism; fatty acid biosynthesis. 3-hydroxyl-[acyl-carrier-protein] (3-hydroxyl-ACP) dehydratase required for mitochondrial fatty acid synthesis (mtFAS). Essential for photorespiration, tomato morphogenesis and plant development, probably by influencing mitochondrial membrane lipid composition and other lipid metabolic pathways, and by contributing to energy supply and reactive oxygen species (ROS) homeostasis. The polypeptide is 3-hydroxyacyl-[acyl-carrier-protein] dehydratase FERN, mitochondrial (Solanum lycopersicum (Tomato)).